The chain runs to 326 residues: uncharacterized protein (326 aa).

S132 is a binding site for substrate. Catalysis depends on Y157, which acts as the Proton acceptor.

Belongs to the NAD(P)-dependent epimerase/dehydratase family. dTDP-glucose dehydratase subfamily.

This is an uncharacterized protein from Methanocaldococcus jannaschii (strain ATCC 43067 / DSM 2661 / JAL-1 / JCM 10045 / NBRC 100440) (Methanococcus jannaschii).